A 278-amino-acid polypeptide reads, in one-letter code: Probable ribosomal RNA small subunit methyltransferase A (278 aa).

Residues N23, L25, G50, E71, D95, and N110 each contribute to the S-adenosyl-L-methionine site.

Belongs to the class I-like SAM-binding methyltransferase superfamily. rRNA adenine N(6)-methyltransferase family. RsmA subfamily.

It localises to the cytoplasm. Specifically dimethylates two adjacent adenosines in the loop of a conserved hairpin near the 3'-end of 16S rRNA in the 30S particle. May play a critical role in biogenesis of 30S subunits. This is Probable ribosomal RNA small subunit methyltransferase A from Thermococcus gammatolerans (strain DSM 15229 / JCM 11827 / EJ3).